Reading from the N-terminus, the 401-residue chain is Probable tRNA sulfurtransferase (401 aa).

One can recognise a THUMP domain in the interval 60–165; the sequence is EPIIDKLKNV…QEGTYITCHD (106 aa). ATP contacts are provided by residues 183 to 184, 208 to 209, Arg-265, Gly-287, and Gln-296; these read ML and HF.

This sequence belongs to the ThiI family.

It localises to the cytoplasm. It carries out the reaction [ThiI sulfur-carrier protein]-S-sulfanyl-L-cysteine + a uridine in tRNA + 2 reduced [2Fe-2S]-[ferredoxin] + ATP + H(+) = [ThiI sulfur-carrier protein]-L-cysteine + a 4-thiouridine in tRNA + 2 oxidized [2Fe-2S]-[ferredoxin] + AMP + diphosphate. The enzyme catalyses [ThiS sulfur-carrier protein]-C-terminal Gly-Gly-AMP + S-sulfanyl-L-cysteinyl-[cysteine desulfurase] + AH2 = [ThiS sulfur-carrier protein]-C-terminal-Gly-aminoethanethioate + L-cysteinyl-[cysteine desulfurase] + A + AMP + 2 H(+). Its pathway is cofactor biosynthesis; thiamine diphosphate biosynthesis. Functionally, catalyzes the ATP-dependent transfer of a sulfur to tRNA to produce 4-thiouridine in position 8 of tRNAs, which functions as a near-UV photosensor. Also catalyzes the transfer of sulfur to the sulfur carrier protein ThiS, forming ThiS-thiocarboxylate. This is a step in the synthesis of thiazole, in the thiamine biosynthesis pathway. The sulfur is donated as persulfide by IscS. In Geobacillus sp. (strain WCH70), this protein is Probable tRNA sulfurtransferase.